Reading from the N-terminus, the 84-residue chain is uncharacterized protein (84 aa).

Residues Ala-34 to Ala-54 show a composition bias toward low complexity. Residues Ala-34–Met-57 are disordered. Asn-45 carries N-linked (GlcNAc...) asparagine glycosylation. The helical transmembrane segment at Tyr-66–Gly-83 threads the bilayer.

The protein localises to the endoplasmic reticulum membrane. This is an uncharacterized protein from Saccharomyces cerevisiae (strain ATCC 204508 / S288c) (Baker's yeast).